Consider the following 494-residue polypeptide: Cytochrome P450 2A4 (494 aa).

The residue at position 131 (S131) is a Phosphoserine. An N6-acetyllysine modification is found at K379. Residue C439 participates in heme binding.

The protein belongs to the cytochrome P450 family. Requires heme as cofactor. In terms of tissue distribution, kidney and lung. Expressed in liver, with a strong circadian rhythmicity. Circadian expression is regulated by DBP.

It localises to the endoplasmic reticulum membrane. Its subcellular location is the microsome membrane. It catalyses the reaction an organic molecule + reduced [NADPH--hemoprotein reductase] + O2 = an alcohol + oxidized [NADPH--hemoprotein reductase] + H2O + H(+). In terms of biological role, highly active in the 15-alpha-hydroxylation of testosterone. Also active in the 15-alpha-hydroxylation of progesterone and androstenedione. Little or no activity on corticosterone, pregnenolone, dehydroepiandrosterone, estradiol or estriol. This chain is Cytochrome P450 2A4 (Cyp2a4), found in Mus musculus (Mouse).